A 307-amino-acid chain; its full sequence is Taste receptor type 2 member 41 (307 aa).

Residues 1–7 (MQAALTA) are Extracellular-facing. A helical membrane pass occupies residues 8–28 (FFMLFFSLLSLLGIAANGFIV). Residues 29–40 (LVLGREWLQYGR) lie on the Cytoplasmic side of the membrane. Residues 41-61 (LLPLDMILISLGVSRFCLQLV) form a helical membrane-spanning segment. Residues 62-88 (GTVYNFYYSAHKVEYSGGLSRQFFHLH) are Extracellular-facing. The chain crosses the membrane as a helical span at residues 89–109 (WHFLNLATFXFCSWLSVLFCV). Topologically, residues 110 to 129 (KXANITHPTFLWLKWRFPGW) are cytoplasmic. The chain crosses the membrane as a helical span at residues 130–150 (VPWLLLGSVLISFIITLLLFW). Topologically, residues 151–183 (VNYPVYQEFLIRKFSGNMTYEWNTRIEMYYLPS) are extracellular. Asn167 is a glycosylation site (N-linked (GlcNAc...) asparagine). Residues 184-204 (LKLVIWSIPCSVFLVSIMLLI) traverse the membrane as a helical segment. Over 205-234 (NSLRRHTWRMQHNGHSLQDPSTQAHTRAXK) the chain is Cytoplasmic. A helical membrane pass occupies residues 235–255 (SLISFLILYVLSFLSLIIDAT). Residues 256-264 (KFISMQNDF) are Extracellular-facing. Residues 265–285 (YWPWQTAVYLGVSVHPFILIF) traverse the membrane as a helical segment. Residues 286-307 (SNLKLRSVFWKLLLLARGFWVA) lie on the Cytoplasmic side of the membrane.

Belongs to the G-protein coupled receptor T2R family.

Its subcellular location is the membrane. Receptor that may play a role in the perception of bitterness and is gustducin-linked. May play a role in sensing the chemical composition of the gastrointestinal content. The activity of this receptor may stimulate alpha gustducin, mediate PLC-beta-2 activation and lead to the gating of TRPM5. The chain is Taste receptor type 2 member 41 (TAS2R41) from Pongo pygmaeus (Bornean orangutan).